A 455-amino-acid chain; its full sequence is uncharacterized protein (455 aa).

The span at 1–20 (MGCCLSKKPSPSLPSSVKPS) shows a compositional bias: low complexity. Disordered regions lie at residues 1 to 234 (MGCC…IPAT) and 258 to 304 (RIAA…QNTK). Basic and acidic residues-rich tracts occupy residues 35–46 (EEAKPKSEKLNQ), 61–75 (SHEE…DKDS), 129–143 (RSFD…RGGD), 156–166 (RGVERVHGSPR), and 173–186 (PSRE…RERG). Polar residues predominate over residues 213–224 (SCGSSVNSSNNR). The segment covering 260–271 (AASPRSKSPARA) has biased composition (low complexity).

This is an uncharacterized protein from Arabidopsis thaliana (Mouse-ear cress).